The sequence spans 214 residues: ATP phosphoribosyltransferase (214 aa).

It belongs to the ATP phosphoribosyltransferase family. Short subfamily. As to quaternary structure, heteromultimer composed of HisG and HisZ subunits.

It is found in the cytoplasm. It carries out the reaction 1-(5-phospho-beta-D-ribosyl)-ATP + diphosphate = 5-phospho-alpha-D-ribose 1-diphosphate + ATP. It functions in the pathway amino-acid biosynthesis; L-histidine biosynthesis; L-histidine from 5-phospho-alpha-D-ribose 1-diphosphate: step 1/9. Its function is as follows. Catalyzes the condensation of ATP and 5-phosphoribose 1-diphosphate to form N'-(5'-phosphoribosyl)-ATP (PR-ATP). Has a crucial role in the pathway because the rate of histidine biosynthesis seems to be controlled primarily by regulation of HisG enzymatic activity. The sequence is that of ATP phosphoribosyltransferase from Lysinibacillus sphaericus (strain C3-41).